Consider the following 66-residue polypeptide: Large ribosomal subunit protein bL35 (66 aa).

The protein belongs to the bacterial ribosomal protein bL35 family.

The chain is Large ribosomal subunit protein bL35 from Phenylobacterium zucineum (strain HLK1).